A 544-amino-acid chain; its full sequence is MGCVQCKDKEAAKLTDDRDTSLSQSGVGYRYGVDPTPQHYPAFSGTGTAVAAIPNYNNFHGAAVSQGMTVFGGISTSTHQGTLRTRGGTGVTLFVALYDYEARTEDDLSFRKGEKFQIINSTEGDWWDARSLTTGGTGYIPSNYVAPVDSIQAEDWYFGKLGRKDAERQLLSTGNPRGTFLIRESETTKGAFSLSIRDWDDVKGDHVKHYKIRKLDSGGYYITTRAQFETLQQLVQHYTERAAGLCCRLVVPCHKGMPRLTDLSVKTKDVWEIPRESLQLIKRLGNGQFGEVWMGTWNGNTKVAIKTLKPGTMSPESFLEEAQIMKKLRHDKLVQLYAVVSEEPIYIVTEYMGKGSLLDFLKDGEGRALKLPNLVDMAAQVAGGMAYIERMNYIHRDLRSANILVGDSLVCKIADFGLARLIEDNEYTARQGAKFPIKWTAPEAALYGKFTIKSDVWSFGILLTELVTKGRVPYPGMNNREVLEQVERGYRMQCPQDCPSSLHELMVQCWKKDAEERPTFEYLQAFLEDYFTATEPQYQPGDNL.

Residue Gly-2 is the site of N-myristoyl glycine attachment. 2 S-palmitoyl cysteine lipidation sites follow: Cys-3 and Cys-6. The 62-residue stretch at 89–150 (TGVTLFVALY…PSNYVAPVDS (62 aa)) folds into the SH3 domain. In terms of domain architecture, SH2 spans 156-253 (WYFGKLGRKD…GLCCRLVVPC (98 aa)). Positions 278-531 (LQLIKRLGNG…YLQAFLEDYF (254 aa)) constitute a Protein kinase domain. ATP-binding positions include 284–292 (LGNGQFGEV) and Lys-306. Asp-397 (proton acceptor) is an active-site residue. A Phosphotyrosine; by autocatalysis modification is found at Tyr-427. Residue Tyr-538 is modified to Phosphotyrosine.

This sequence belongs to the protein kinase superfamily. Tyr protein kinase family. SRC subfamily. The cofactor is Mn(2+).

The protein localises to the cytoplasm. The catalysed reaction is L-tyrosyl-[protein] + ATP = O-phospho-L-tyrosyl-[protein] + ADP + H(+). Inhibited by phosphorylation of Tyr-538 by leukocyte common antigen and activated by dephosphorylation of this site. Functionally, tyrosine-protein kinase implicated in the control of cell growth. Plays a role in the regulation of intracellular calcium levels. Required in brain development and mature brain function with important roles in the regulation of axon growth, axon guidance, and neurite extension. Role in CNTN1-mediated signaling. The protein is Tyrosine-protein kinase fynb (fynb) of Danio rerio (Zebrafish).